The following is a 398-amino-acid chain: Acetate kinase 1 (398 aa).

Asparagine 9 is a Mg(2+) binding site. Lysine 16 contacts ATP. Residue arginine 89 participates in substrate binding. Residue aspartate 146 is the Proton donor/acceptor of the active site. Residues 206–210 (HLGNG), 281–283 (DCR), and 329–333 (GIGEN) contribute to the ATP site. Glutamate 384 contacts Mg(2+).

This sequence belongs to the acetokinase family. As to quaternary structure, homodimer. The cofactor is Mg(2+). Mn(2+) serves as cofactor.

The protein localises to the cytoplasm. The enzyme catalyses acetate + ATP = acetyl phosphate + ADP. The protein operates within metabolic intermediate biosynthesis; acetyl-CoA biosynthesis; acetyl-CoA from acetate: step 1/2. Catalyzes the formation of acetyl phosphate from acetate and ATP. Can also catalyze the reverse reaction. This chain is Acetate kinase 1, found in Aliivibrio fischeri (strain ATCC 700601 / ES114) (Vibrio fischeri).